The sequence spans 1744 residues: Probable disease resistance protein At4g19520 (1744 aa).

The TIR 1 domain maps to 3–163 (DGKEVYISFN…KIVADVRQKL (161 aa)). Glutamate 80 is a catalytic residue. In terms of domain architecture, NB-ARC spans 192–411 (SLGIWGMAGI…VSEKEIFLDI (220 aa)). LRR repeat units follow at residues 503 to 526 (YEDV…AFQH), 557 to 581 (PPEL…GFQY), 583 to 602 (VELN…TKNL), 603 to 626 (EVLK…QYSP), 648 to 669 (LQHL…PKVP), 670 to 692 (PSIR…NHSS), 710 to 733 (DHRK…IVIF), 734 to 754 (ESLE…QGFP), 755 to 777 (QNLK…LCHH), 779 to 802 (SKLV…MSNM), 804 to 823 (YLAV…KELP), 824 to 846 (RNLK…LLET), 848 to 871 (SEVV…MSKL), 892 to 915 (PLNL…IGDL), 917 to 939 (LLDT…MHNL), 941 to 963 (PLKV…LPKV), 987 to 1010 (YEHR…IRWM), 1011 to 1035 (PSLK…DFSK), 1037 to 1059 (LSLR…SLQL), and 1062 to 1086 (AHGC…TFSN). Residues 1399-1559 (RNNDVFVSFH…KVANDIRKKL (161 aa)) form the TIR 2 domain.

Belongs to the disease resistance TIR-NB-LRR family.

The enzyme catalyses NAD(+) + H2O = ADP-D-ribose + nicotinamide + H(+). Probable disease resistance protein. The protein is Probable disease resistance protein At4g19520 of Arabidopsis thaliana (Mouse-ear cress).